A 106-amino-acid chain; its full sequence is Large ribosomal subunit protein eL42 (106 aa).

Residues 37 to 56 (SQGKRRYDRKQSGYGGQTKP) are disordered.

It belongs to the eukaryotic ribosomal protein eL42 family.

The chain is Large ribosomal subunit protein eL42 (RPL44) from Pichia kudriavzevii (Yeast).